We begin with the raw amino-acid sequence, 662 residues long: DNA topoisomerase 4 subunit B (662 aa).

ATP contacts are provided by residues Tyr-20, Asn-60, Asp-87, 129-135 (GLHGVGI), and Lys-359. A Toprim domain is found at 439 to 553 (TELFIVEGDS…EGHLYLAKPP (115 aa)). Mg(2+) contacts are provided by Glu-445, Asp-518, and Asp-520.

Belongs to the type II topoisomerase family. ParE type 1 subfamily. In terms of assembly, heterotetramer composed of ParC and ParE. The cofactor is Mg(2+). Mn(2+) serves as cofactor. Requires Ca(2+) as cofactor.

The enzyme catalyses ATP-dependent breakage, passage and rejoining of double-stranded DNA.. Its function is as follows. Topoisomerase IV is essential for chromosome segregation. It relaxes supercoiled DNA. Performs the decatenation events required during the replication of a circular DNA molecule. This chain is DNA topoisomerase 4 subunit B, found in Rickettsia felis (strain ATCC VR-1525 / URRWXCal2) (Rickettsia azadi).